The chain runs to 97 residues: UPF0235 protein APP7_1431 (97 aa).

Belongs to the UPF0235 family.

The protein is UPF0235 protein APP7_1431 of Actinobacillus pleuropneumoniae serotype 7 (strain AP76).